The sequence spans 653 residues: Potassium voltage-gated channel subfamily A member 4 (653 aa).

Topologically, residues 1-304 (MEVAMVSAES…LLFEYPESSS (304 aa)) are cytoplasmic. The disordered stretch occupies residues 24-148 (QARARERERL…RFYYSEDDHG (125 aa)). Residues 36 to 52 (SRAAAAAAVAAATAAVE) are compositionally biased toward low complexity. The segment covering 81 to 97 (GSRRRRRQRSEKKKAHY) has biased composition (basic residues). The residue at position 90 (Ser90) is a Phosphoserine; by PKA. Ser122 is subject to Phosphoserine. A compositionally biased stretch (acidic residues) spans 122–137 (SEEEEDEEEEEEEEEE). The helical transmembrane segment at 305 to 326 (PARGIAIVSVLVILISIVIFCL) threads the bilayer. Over 327-370 (ETLPEFRDDRDLVMALSAGGHGGLLNDTSAPHLENSGHTIFNDP) the chain is Extracellular. Asn352 carries an N-linked (GlcNAc...) asparagine glycan. A helical membrane pass occupies residues 371–392 (FFIVETVCIVWFSFEFVVRCFA). Over 393–403 (CPSQALFFKNI) the chain is Cytoplasmic. A helical transmembrane segment spans residues 404–424 (MNIIDIVSILPYFITLGTDLA). Topologically, residues 425–439 (QQQGGGNGQQQQAMS) are extracellular. The helical; Voltage-sensor transmembrane segment at 440 to 460 (FAILRIIRLVRVFRIFKLSRH) threads the bilayer. Over 461-475 (SKGLQILGHTLRASM) the chain is Cytoplasmic. The segment at 462–475 (KGLQILGHTLRASM) is S4-S5 linker. The helical transmembrane segment at 476–497 (RELGLLIFFLFIGVILFSSAVY) threads the bilayer. Residues 498-511 (FAEADEPTTHFQSI) lie on the Extracellular side of the membrane. The segment at residues 512 to 523 (PDAFWWAVVTMT) is an intramembrane region (helical). Residues 524 to 529 (TVGYGD) carry the Selectivity filter motif. An intramembrane segment occupies 524 to 531 (TVGYGDMK). At 532 to 538 (PITVGGK) the chain is on the extracellular side. A helical transmembrane segment spans residues 539–567 (IVGSLCAIAGVLTIALPVPVIVSNFNYFY). At 568–653 (HRETENEEQT…SNAKAVETDV (86 aa)) the chain is on the cytoplasmic side. Ser599 is subject to Phosphoserine; by PKA. Residues 629–640 (CQGKGDDSETDK) show a composition bias toward basic and acidic residues. A disordered region spans residues 629–653 (CQGKGDDSETDKNNCSNAKAVETDV). The short motif at 651-653 (TDV) is the PDZ-binding element.

It belongs to the potassium channel family. A (Shaker) (TC 1.A.1.2) subfamily. Kv1.4/KCNA4 sub-subfamily. As to quaternary structure, homotetramer and heterotetramer of potassium channel proteins. Interacts with KCNAB1 and KCNAB2. Interacts with DLG1, DLG2 and DLG4 via their PDZ domains. Interacts with SIGMAR1. Detected in a complex with KCNA1. Interacts with KCNA2. Part of a complex containing KCNA1, KCNAB1 and LGI1. Interacts (via cytoplasmic N-terminal domain) with KCNRG. Expressed in brain, and at lower levels in the testis, lung, kidney, colon and heart. Detected in heart ventricle.

It is found in the cell membrane. It localises to the cell projection. Its subcellular location is the axon. It carries out the reaction K(+)(in) = K(+)(out). Inhibited by 4-aminopyridine (4-AP), but not by tetraethylammonium (TEA) and charybdotoxin (CTX). In terms of biological role, voltage-gated potassium channel that mediates transmembrane potassium transport in excitable membranes. Forms tetrameric potassium-selective channels through which potassium ions pass in accordance with their electrochemical gradient. The channel alternates between opened and closed conformations in response to the voltage difference across the membrane. Can form functional homotetrameric channels and heterotetrameric channels that contain variable proportions of KCNA1, KCNA2, KCNA4, KCNA5, and possibly other family members as well; channel properties depend on the type of alpha subunits that are part of the channel. Channel properties are modulated by cytoplasmic beta subunits that regulate the subcellular location of the alpha subunits and promote rapid inactivation. In vivo, membranes probably contain a mixture of heteromeric potassium channel complexes, making it difficult to assign currents observed in intact tissues to any particular potassium channel family member. Homotetrameric KCNA4 forms a potassium channel that opens in response to membrane depolarization, followed by rapid spontaneous channel closure. Likewise, a heterotetrameric channel formed by KCNA1 and KCNA4 shows rapid inactivation. This chain is Potassium voltage-gated channel subfamily A member 4 (KCNA4), found in Homo sapiens (Human).